The sequence spans 434 residues: MAMQKIFAREILDSRGNPTVEVDLHTAKGRFRAAVPSGASTGIYEALELRDGDKGRYLGKGVLKAVENINNTLGPALLQKKLSVVDQEKVDKFMIELDGTENKSKFGANAILGVSLAVCKAGAAEKGVPLYRHIADLAGNPDLILPVPAFNVINGGSHAGNKLAMQEFMILPVGASSFKEAMRIGAEVYHHLKGVIKAKYGKDATNVGDEGGFAPNILENNEALELLKTAIQAAGYPDKVVIGMDVAASEFYRNGKYDLDFKSPDDPARHITGEKLGELYKSFIKNYPVVSIEDPFDQDDWATWTSFLSGVNIQIVGDDLTVTNPKRIAQAVEKKACNCLLLKVNQIGSVTESIQACKLAQSNGWGVMVSHRSGETEDTFIADLVVGLCTGQIKTGAPCRSERLAKYNQLMRIEEALGDKAIFAGRKFRNPKAK.

Alanine 2 carries the post-translational modification N-acetylalanine. A Phosphothreonine modification is found at threonine 72. Phosphoserine is present on residues serine 83 and serine 157. Residues histidine 158 and glutamate 167 each contribute to the substrate site. At serine 176 the chain carries Phosphoserine. Position 205 is a phosphothreonine (threonine 205). Glutamate 210 acts as the Proton donor in catalysis. Residue threonine 229 is modified to Phosphothreonine. Tyrosine 236 bears the Phosphotyrosine mark. Aspartate 245 contacts Mg(2+). Serine 263 is modified (phosphoserine). Substrate contacts are provided by glutamate 293 and aspartate 318. Glutamate 293 and aspartate 318 together coordinate Mg(2+). Lysine 343 acts as the Proton acceptor in catalysis. Residues 370 to 373 (SHRS) and lysine 394 contribute to the substrate site.

This sequence belongs to the enolase family. Mammalian enolase is composed of 3 isozyme subunits, alpha, beta and gamma, which can form homodimers or heterodimers which are cell-type and development-specific. Interacts with PNKD. Requires Mg(2+) as cofactor. In terms of tissue distribution, the alpha/alpha homodimer is expressed in embryo and in most adult tissues. The alpha/beta heterodimer and the beta/beta homodimer are found in striated muscle, and the alpha/gamma heterodimer and the gamma/gamma homodimer in neurons.

The protein localises to the cytoplasm. It catalyses the reaction (2R)-2-phosphoglycerate = phosphoenolpyruvate + H2O. Its pathway is carbohydrate degradation; glycolysis; pyruvate from D-glyceraldehyde 3-phosphate: step 4/5. Functionally, glycolytic enzyme that catalyzes the conversion of 2-phosphoglycerate to phosphoenolpyruvate. Appears to have a function in striated muscle development and regeneration. This Homo sapiens (Human) protein is Beta-enolase (ENO3).